We begin with the raw amino-acid sequence, 583 residues long: Lamin-B3 (583 aa).

The segment at methionine 1–glutamate 30 is disordered. The segment at alanine 2–glutamate 32 is head. A compositionally biased stretch (polar residues) spans alanine 15 to serine 26. Serine 21 bears the Phosphoserine mark. The IF rod domain occupies glutamate 30–leucine 386. The coil 1A stretch occupies residues aspartate 33–glutamate 67. The linker 1 stretch occupies residues valine 68–leucine 79. Residues tyrosine 80–lysine 215 are coil 1B. Residues glutamate 216–glutamate 242 form a linker 2 region. The coil 2 stretch occupies residues alanine 243 to glutamine 384. Residues glutamate 383 to valine 431 are disordered. The tract at residues arginine 385 to cysteine 580 is tail. A compositionally biased stretch (polar residues) spans proline 390–arginine 408. Serine 391 carries the post-translational modification Phosphoserine. Residues tyrosine 429–arginine 546 enclose the LTD domain. Cysteine methyl ester is present on cysteine 580. Cysteine 580 carries S-farnesyl cysteine lipidation. Residues serine 581 to methionine 583 constitute a propeptide, removed in mature form.

It belongs to the intermediate filament family. In terms of processing, phosphorylation plays a key role in lamin organization, subcellular localization and nuclear envelope disintegration. Phosphorylation by CDK1 at Ser-21 at the onset of mitosis drives lamin disassembly and nuclear envelope breakdown.

It is found in the nucleus lamina. The protein resides in the nucleus envelope. The protein localises to the nucleus. Its subcellular location is the nucleoplasm. It localises to the nucleus matrix. Functionally, lamins are intermediate filament proteins that assemble into a filamentous meshwork, and which constitute the major components of the nuclear lamina, a fibrous layer on the nucleoplasmic side of the inner nuclear membrane. Lamins provide a framework for the nuclear envelope, bridging the nuclear envelope and chromatin, thereby playing an important role in nuclear assembly, chromatin organization, nuclear membrane and telomere dynamics. The structural integrity of the lamina is strictly controlled by the cell cycle, as seen by the disintegration and formation of the nuclear envelope in prophase and telophase, respectively. This Xenopus laevis (African clawed frog) protein is Lamin-B3 (lmnb3.L).